We begin with the raw amino-acid sequence, 291 residues long: 4-hydroxy-tetrahydrodipicolinate synthase (291 aa).

A pyruvate-binding site is contributed by Thr-47. The Proton donor/acceptor role is filled by Tyr-134. Lys-162 (schiff-base intermediate with substrate) is an active-site residue. Position 205 (Ile-205) interacts with pyruvate.

This sequence belongs to the DapA family. In terms of assembly, homotetramer; dimer of dimers.

It localises to the cytoplasm. It carries out the reaction L-aspartate 4-semialdehyde + pyruvate = (2S,4S)-4-hydroxy-2,3,4,5-tetrahydrodipicolinate + H2O + H(+). It participates in amino-acid biosynthesis; L-lysine biosynthesis via DAP pathway; (S)-tetrahydrodipicolinate from L-aspartate: step 3/4. Catalyzes the condensation of (S)-aspartate-beta-semialdehyde [(S)-ASA] and pyruvate to 4-hydroxy-tetrahydrodipicolinate (HTPA). The sequence is that of 4-hydroxy-tetrahydrodipicolinate synthase from Methanospirillum hungatei JF-1 (strain ATCC 27890 / DSM 864 / NBRC 100397 / JF-1).